Here is a 462-residue protein sequence, read N- to C-terminus: Semenogelin-1 (462 aa).

Residues 1-23 form the signal peptide; it reads MKPNIIFVLSLLLILEKQAAVMG. Gln24 is modified (pyrrolidone carboxylic acid). Residues 24-61 form a disordered region; that stretch reads QKGGSKGRLPSEFSQFPHGQKGQHYSGQKGKQQTESKG. Residues 46 to 61 are compositionally biased toward polar residues; the sequence is QHYSGQKGKQQTESKG. Tandem repeats lie at residues 70–129, 141–200, and 201–260. The repeat-rich region stretch occupies residues 70 to 439; the sequence is HVDANDHDQS…SHGGLDIVII (370 aa). Disordered regions lie at residues 131-157 and 173-194; these read KGGK…GISS and KEQT…QSSY. Over residues 138–157 the composition is skewed to polar residues; it reads GTQNPSQDQGNSPSGKGISS. Residues 164 to 283 are interaction with EPPIN; that stretch reads ERLWVHGLSK…NQDQQHGRKA (120 aa). Residues 261-380 are 2 X 60 AA tandem repeats, type 1; that stretch reads LVYNKNQHQT…QRSIYSQTEK (120 aa). Positions 270 to 432 are disordered; it reads TKNLNQDQQH…KGRHQHGSHG (163 aa). 3 stretches are compositionally biased toward polar residues: residues 308–317, 324–335, and 343–352; these read DVSQSSIYSQ, GKSQKQITIPSQ, and ANKISYQSSS. The 3-2 repeat unit spans residues 381 to 439; that stretch reads LVAGKSQIQAPNPKQEPWHGENAKGESGQSTNREQDLLSHEQKGRHQHGSHGGLDIVII. Residues 413-424 show a composition bias toward basic and acidic residues; the sequence is REQDLLSHEQKG.

It belongs to the semenogelin family. In terms of assembly, occurs in disulfide-linked complexes which may also contain two less abundant 71- and 76-kDa semenogelin-related polypeptides. Interacts with EPPIN (via C-terminus); Cys-239 is a critical amino acid for both binding to EPPIN. Transglutaminase substrate. In terms of processing, rapidly cleaved after ejaculation by KLK3/PSA, resulting in liquefaction of the semen coagulum and the progressive release of motile spermatozoa. As to expression, seminal vesicle.

The protein resides in the secreted. Predominant protein in semen. It participates in the formation of a gel matrix entrapping the accessory gland secretions and ejaculated spermatozoa. Fragments of semenogelin and/or fragments of the related proteins may contribute to the activation of progressive sperm movements as the gel-forming proteins are fragmented by KLK3/PSA. Functionally, alpha-inhibin-92 and alpha-inhibin-31, derived from the proteolytic degradation of semenogelin, inhibit the secretion of pituitary follicle-stimulating hormone. The protein is Semenogelin-1 (SEMG1) of Homo sapiens (Human).